A 362-amino-acid polypeptide reads, in one-letter code: Outer membrane porin F (362 aa).

An N-terminal signal peptide occupies residues 1–22 (MMKRNILAVIVPALLVAGTANA).

The protein belongs to the Gram-negative porin family. As to quaternary structure, homotrimer. Forms mixed heterotrimers with OmpC; other mixed heterotrimers are also probable.

The protein localises to the cell outer membrane. In terms of biological role, forms pores that allow passive diffusion of small molecules across the outer membrane. (Microbial infection) Is the major receptor for colicin E5. Its function is as follows. (Microbial infection) A mixed OmpC-OmpF heterotrimer is the outer membrane receptor for toxin CdiA-EC536. The chain is Outer membrane porin F (ompF) from Escherichia coli O6:K15:H31 (strain 536 / UPEC).